A 1756-amino-acid chain; its full sequence is Nucleoporin NUP192 (1756 aa).

The protein belongs to the NUP186/NUP192/NUP205 family. As to quaternary structure, component of the nuclear pore complex (NPC). NPC constitutes the exclusive means of nucleocytoplasmic transport. NPCs allow the passive diffusion of ions and small molecules and the active, nuclear transport receptor-mediated bidirectional transport of macromolecules such as proteins, RNAs, ribonucleoparticles (RNPs), and ribosomal subunits across the nuclear envelope. Due to its 8-fold rotational symmetry, all subunits are present with 8 copies or multiples thereof. Part of a tetrameric NUP192-NUP170-NIC96-NUP53 module.

It is found in the nucleus. The protein localises to the nuclear pore complex. Its function is as follows. Functions as a component of the nuclear pore complex (NPC). NPC components, collectively referred to as nucleoporins (NUPs), can play the role of both NPC structural components and of docking or interaction partners for transiently associated nuclear transport factors. NUP192 is located to the NPC core at the nuclear membrane and is essential for de novo assembly of NPCs. This is Nucleoporin NUP192 (NUP192) from Chaetomium thermophilum (strain DSM 1495 / CBS 144.50 / IMI 039719) (Thermochaetoides thermophila).